A 447-amino-acid polypeptide reads, in one-letter code: MGQTFHAFMFPWFAFGHMTPYLHLANKLAERGHRITFLIPKKAQKQLEHLNLFPDSIVFHSLTIPHVDGLPAGAETFSDIPMPLWKFLPPAIDLTRDQVEAAVSALSPDLILFDIASWVPEVAKEYRVKSMLYNIISATSIAHDFVPGGELGVPPPGYPSSKLLYRKHDAHALLSFSVYYKRFSHRLITGLMNCDFISIRTCKEIEGKFCEYLERQYHKKVFLTGPMLPEPNKGKPLEDRWSHWLNGFEQGSVVFCALGSQVTLEKDQFQELCLGIELTGLPFFVAVTPPKGAKTIQDALPEGFEERVKDRGVVLGEWVQQPLLLAHPSVGCFLSHCGFGSMWESIMSDCQIVLLPFLADQVLNTRLMTEELKVSVEVQREETGWFSKESLSVAITSVMDQASEIGNLVRRNHSKLKEVLVSDGLLTGYTDKFVDTLENLVSETKRE.

UDP-alpha-D-glucose is bound by residues S260, 319-321 (VQQ), 336-344 (HCGFGSMWE), and 358-361 (LADQ).

It belongs to the UDP-glycosyltransferase family.

The protein is UDP-glycosyltransferase 79B10 (UGT79B10) of Arabidopsis thaliana (Mouse-ear cress).